The following is a 117-amino-acid chain: Large ribosomal subunit protein uL18 (117 aa).

The protein belongs to the universal ribosomal protein uL18 family. In terms of assembly, part of the 50S ribosomal subunit; part of the 5S rRNA/L5/L18/L25 subcomplex. Contacts the 5S and 23S rRNAs.

In terms of biological role, this is one of the proteins that bind and probably mediate the attachment of the 5S RNA into the large ribosomal subunit, where it forms part of the central protuberance. This chain is Large ribosomal subunit protein uL18, found in Methylobacillus flagellatus (strain ATCC 51484 / DSM 6875 / VKM B-1610 / KT).